Consider the following 200-residue polypeptide: Coiled-coil domain-containing protein 28B (200 aa).

Met-1 is subject to N-acetylmethionine. The span at 1 to 10 shows a compositional bias: basic residues; that stretch reads MDDKKKKRSP. The tract at residues 1-49 is disordered; that stretch reads MDDKKKKRSPKPCLAQPAQAPGTLRRVPVPTSHSGSLALGLPHLPSPKQ. Phosphoserine is present on residues Ser-46 and Ser-115. Residues 141–152 show a composition bias toward acidic residues; that stretch reads EEEDDEEEEDGV. Positions 141–164 are disordered; sequence EEEDDEEEEDGVTEGLPEEQKKTM. The stretch at 158 to 183 forms a coiled coil; that stretch reads EEQKKTMADRNLDQLLSNLEDLSNSI.

In terms of assembly, interacts with BBS1, BBS2, BBS4, BBS5, BBS6, BBS7 and TTC8/BBS8. Interacts with MAPKAP1/SIN1 isoform 1 and RICTOR.

It localises to the cytoplasm. Its subcellular location is the cytoskeleton. It is found in the microtubule organizing center. The protein resides in the centrosome. Its function is as follows. Involved in ciliogenesis. Regulates cilia length through its interaction with MAPKAP1/SIN1 but independently of mTORC2 complex. Modulates mTORC2 complex assembly and function, possibly enhances AKT1 phosphorylation. Does not seem to modulate assembly and function of mTORC1 complex. The sequence is that of Coiled-coil domain-containing protein 28B (CCDC28B) from Homo sapiens (Human).